Here is a 223-residue protein sequence, read N- to C-terminus: Large ribosomal subunit protein uL4 (223 aa).

The segment at 49–106 is disordered; sequence AAARQGTHSTKTRGEVSGGGRKPYRQKGTGRARQGSTRAPQFTGGGVVHGPKPRDYSQ.

Belongs to the universal ribosomal protein uL4 family. Part of the 50S ribosomal subunit.

In terms of biological role, one of the primary rRNA binding proteins, this protein initially binds near the 5'-end of the 23S rRNA. It is important during the early stages of 50S assembly. It makes multiple contacts with different domains of the 23S rRNA in the assembled 50S subunit and ribosome. Forms part of the polypeptide exit tunnel. In Mycobacterium bovis (strain ATCC BAA-935 / AF2122/97), this protein is Large ribosomal subunit protein uL4.